The chain runs to 368 residues: SH3 domain-containing protein 2 (368 aa).

2 coiled-coil regions span residues Met-1–Ala-21 and Leu-146–Glu-210. One can recognise a BAR domain in the interval Met-1 to Ala-264. The interval Glu-258–Glu-281 is disordered. An SH3 domain is found at Met-299–Arg-358.

Homodimer. Interacts with FREE1. Interacts (via SH3 domain) with ATG8E and ATG8F. Component of a phosphoinositide 3-kinase (PI3K) complex containing ATG6, SH3P2 and FREE1. Binds to SH3P3 and DRP1A. Forms a complex made of SH3P2 and DRP1A and triggers its accumulation at the cell plate. As to expression, highly expressed in seedlings. Detected in flowers, leaves and stems.

Its subcellular location is the cytoplasm. It is found in the cytoplasmic vesicle. The protein resides in the clathrin-coated vesicle. The protein localises to the cell membrane. It localises to the late endosome. Its subcellular location is the autophagosome membrane. Its function is as follows. Regulator for autophaosome formation and/or maturation. Binds phosphatidylinositol-phosphate; highest affinity for vesicles containing PtdIns(3,4,5)P(3), followed by those containing PtdIns(4,5)P(2) and PtdIns(3,4)P(2), with minimal binding to phosphatidylinositol monophosphates, including PtdIns(3)P. Together with DRP1A, converts the fused vesicles to tubular structures at the cell plate during cytokinesis. This chain is SH3 domain-containing protein 2, found in Arabidopsis thaliana (Mouse-ear cress).